The sequence spans 189 residues: MATYSASDFRSGLKVMLDGDPCAIVENELVKPGKGQAFARVRLRNLKTGRVWERTFKSGETLEGADVMDRDMEYLYTDGEFWHFMEPDSFEQYQADANAVGDSAKWLREQDKVIVTLFNGSPLAITPPNHVELEIVETDPGLKGDTAQGGTKPATLTTGAVVKVPLFISTGEVVRVDTRTGEYLGRASK.

The residue at position 34 (Lys-34) is an N6-(3,6-diaminohexanoyl)-5-hydroxylysine.

This sequence belongs to the elongation factor P family. In terms of processing, may be beta-lysylated on the epsilon-amino group of Lys-34 by the combined action of EpmA and EpmB, and then hydroxylated on the C5 position of the same residue by EpmC (if this protein is present). Lysylation is critical for the stimulatory effect of EF-P on peptide-bond formation. The lysylation moiety may extend toward the peptidyltransferase center and stabilize the terminal 3-CCA end of the tRNA. Hydroxylation of the C5 position on Lys-34 may allow additional potential stabilizing hydrogen-bond interactions with the P-tRNA.

It is found in the cytoplasm. Its pathway is protein biosynthesis; polypeptide chain elongation. Involved in peptide bond synthesis. Alleviates ribosome stalling that occurs when 3 or more consecutive Pro residues or the sequence PPG is present in a protein, possibly by augmenting the peptidyl transferase activity of the ribosome. Modification of Lys-34 is required for alleviation. The sequence is that of Elongation factor P from Saccharophagus degradans (strain 2-40 / ATCC 43961 / DSM 17024).